Consider the following 91-residue polypeptide: Probable Thioredoxin (91 aa).

Positions 1–91 constitute a Glutaredoxin domain; sequence MVMMKLFTSP…LKGGEEYGAS (91 aa). Cys12 and Cys15 form a disulfide bridge.

The protein belongs to the glutaredoxin family.

The protein resides in the cytoplasm. Acts to maintain redox homeostasis; functions as a protein disulfide reductase. This chain is Probable Thioredoxin, found in Archaeoglobus fulgidus (strain ATCC 49558 / DSM 4304 / JCM 9628 / NBRC 100126 / VC-16).